Consider the following 148-residue polypeptide: uncharacterized protein (148 aa).

The interval 55 to 148 (KMRCGESGAG…RNQGQLYPQP (94 aa)) is disordered. Residues 68–104 (RSNSAEVSSSQPALASKSQSKWGPTSNNPRGALTTTE) show a composition bias toward polar residues.

This is an uncharacterized protein from Homo sapiens (Human).